Consider the following 660-residue polypeptide: tRNA 5-methylaminomethyl-2-thiouridine biosynthesis bifunctional protein MnmC (660 aa).

Residues 1 to 233 are tRNA (mnm(5)s(2)U34)-methyltransferase; the sequence is MTHSHAQLVW…KRHISHGWIA (233 aa). The tract at residues 260 to 660 is FAD-dependent cmnm(5)s(2)U34 oxidoreductase; the sequence is VGGGLAGAAS…IRRKLDPDAL (401 aa).

This sequence in the N-terminal section; belongs to the methyltransferase superfamily. tRNA (mnm(5)s(2)U34)-methyltransferase family. It in the C-terminal section; belongs to the DAO family. The cofactor is FAD.

Its subcellular location is the cytoplasm. It carries out the reaction 5-aminomethyl-2-thiouridine(34) in tRNA + S-adenosyl-L-methionine = 5-methylaminomethyl-2-thiouridine(34) in tRNA + S-adenosyl-L-homocysteine + H(+). In terms of biological role, catalyzes the last two steps in the biosynthesis of 5-methylaminomethyl-2-thiouridine (mnm(5)s(2)U) at the wobble position (U34) in tRNA. Catalyzes the FAD-dependent demodification of cmnm(5)s(2)U34 to nm(5)s(2)U34, followed by the transfer of a methyl group from S-adenosyl-L-methionine to nm(5)s(2)U34, to form mnm(5)s(2)U34. The chain is tRNA 5-methylaminomethyl-2-thiouridine biosynthesis bifunctional protein MnmC from Chromobacterium violaceum (strain ATCC 12472 / DSM 30191 / JCM 1249 / CCUG 213 / NBRC 12614 / NCIMB 9131 / NCTC 9757 / MK).